A 529-amino-acid polypeptide reads, in one-letter code: GTPase Obg (529 aa).

Residues 2–159 (PTFVDRVVLH…LDAVLELKTV (158 aa)) form the Obg domain. The tract at residues 62-86 (FHPHQRASRGRPGQGSNRHGADGAD) is disordered. An OBG-type G domain is found at 160–332 (ADVALVGFPS…LSLALADLVA (173 aa)). GTP is bound by residues 166 to 173 (GFPSAGKS), 191 to 195 (FTTLV), 213 to 216 (DVPG), 284 to 287 (NKID), and 313 to 315 (STA). Mg(2+) contacts are provided by serine 173 and threonine 193. Positions 350-427 (PRAVNEPDFT…IGEVTFDWEP (78 aa)) constitute an OCT domain. 2 disordered regions span residues 434–494 (LGNG…DRLR) and 506–529 (ARRA…EEEG). 2 stretches are compositionally biased toward low complexity: residues 461–472 (AGTAASGAAPSP) and 508–520 (RAAA…VRGE).

It belongs to the TRAFAC class OBG-HflX-like GTPase superfamily. OBG GTPase family. Monomer. Mg(2+) serves as cofactor.

The protein localises to the cytoplasm. In terms of biological role, an essential GTPase which binds GTP, GDP and possibly (p)ppGpp with moderate affinity, with high nucleotide exchange rates and a fairly low GTP hydrolysis rate. Plays a role in control of the cell cycle, stress response, ribosome biogenesis and in those bacteria that undergo differentiation, in morphogenesis control. The sequence is that of GTPase Obg from Frankia casuarinae (strain DSM 45818 / CECT 9043 / HFP020203 / CcI3).